Consider the following 600-residue polypeptide: Phosphoenolpyruvate carboxykinase (ATP) (600 aa).

Residue 302–309 (GLSGTGKT) coordinates ATP.

The protein belongs to the phosphoenolpyruvate carboxykinase (ATP) family.

It carries out the reaction oxaloacetate + ATP = phosphoenolpyruvate + ADP + CO2. Its pathway is carbohydrate biosynthesis; gluconeogenesis. The polypeptide is Phosphoenolpyruvate carboxykinase (ATP) (acuF) (Emericella nidulans (strain FGSC A4 / ATCC 38163 / CBS 112.46 / NRRL 194 / M139) (Aspergillus nidulans)).